We begin with the raw amino-acid sequence, 292 residues long: uncharacterized protein (292 aa).

This is an uncharacterized protein from Aquifex aeolicus (strain VF5).